The chain runs to 391 residues: Arginine biosynthesis bifunctional protein ArgJ 2 (391 aa).

Residues K167 and S180 each coordinate substrate. S180 (nucleophile) is an active-site residue.

It belongs to the ArgJ family. Heterotetramer of two alpha and two beta chains.

The protein resides in the cytoplasm. It carries out the reaction N(2)-acetyl-L-ornithine + L-glutamate = N-acetyl-L-glutamate + L-ornithine. The enzyme catalyses L-glutamate + acetyl-CoA = N-acetyl-L-glutamate + CoA + H(+). Its pathway is amino-acid biosynthesis; L-arginine biosynthesis; L-ornithine and N-acetyl-L-glutamate from L-glutamate and N(2)-acetyl-L-ornithine (cyclic): step 1/1. The protein operates within amino-acid biosynthesis; L-arginine biosynthesis; N(2)-acetyl-L-ornithine from L-glutamate: step 1/4. Catalyzes two activities which are involved in the cyclic version of arginine biosynthesis: the synthesis of N-acetylglutamate from glutamate and acetyl-CoA as the acetyl donor, and of ornithine by transacetylation between N(2)-acetylornithine and glutamate. In Streptomyces clavuligerus, this protein is Arginine biosynthesis bifunctional protein ArgJ 2.